A 108-amino-acid polypeptide reads, in one-letter code: ATP-dependent Clp protease adapter protein ClpS (108 aa).

This sequence belongs to the ClpS family. As to quaternary structure, binds to the N-terminal domain of the chaperone ClpA.

In terms of biological role, involved in the modulation of the specificity of the ClpAP-mediated ATP-dependent protein degradation. The protein is ATP-dependent Clp protease adapter protein ClpS of Mycobacterium leprae (strain TN).